Reading from the N-terminus, the 398-residue chain is Acetate kinase (398 aa).

Position 7 (Asn7) interacts with Mg(2+). Lys14 contributes to the ATP binding site. Arg91 is a substrate binding site. Asp148 (proton donor/acceptor) is an active-site residue. ATP contacts are provided by residues 208–212, 283–285, and 331–335; these read HLGNG, DFR, and GLGEN. Position 384 (Glu384) interacts with Mg(2+).

It belongs to the acetokinase family. Homodimer. Mg(2+) is required as a cofactor. Mn(2+) serves as cofactor.

The protein localises to the cytoplasm. It catalyses the reaction acetate + ATP = acetyl phosphate + ADP. It participates in metabolic intermediate biosynthesis; acetyl-CoA biosynthesis; acetyl-CoA from acetate: step 1/2. Catalyzes the formation of acetyl phosphate from acetate and ATP. Can also catalyze the reverse reaction. The sequence is that of Acetate kinase from Natranaerobius thermophilus (strain ATCC BAA-1301 / DSM 18059 / JW/NM-WN-LF).